The sequence spans 750 residues: Photosystem I P700 chlorophyll a apoprotein A1 (750 aa).

Helical transmembrane passes span valine 70–alanine 93, leucine 156–histidine 179, leucine 195–leucine 219, isoleucine 291–tyrosine 309, tryptophan 346–tyrosine 369, leucine 385–valine 411, alanine 433–histidine 455, and phenylalanine 531–leucine 549. Residues cysteine 573 and cysteine 582 each coordinate [4Fe-4S] cluster. The next 2 helical transmembrane spans lie at histidine 589–tryptophan 610 and leucine 664–phenylalanine 686. Histidine 675 is a binding site for chlorophyll a'. Positions 683 and 691 each coordinate chlorophyll a. Tryptophan 692 contacts phylloquinone. Residues alanine 724–alanine 744 form a helical membrane-spanning segment.

It belongs to the PsaA/PsaB family. As to quaternary structure, the PsaA/B heterodimer binds the P700 chlorophyll special pair and subsequent electron acceptors. PSI consists of a core antenna complex that captures photons, and an electron transfer chain that converts photonic excitation into a charge separation. The eukaryotic PSI reaction center is composed of at least 11 subunits. It depends on P700 is a chlorophyll a/chlorophyll a' dimer, A0 is one or more chlorophyll a, A1 is one or both phylloquinones and FX is a shared 4Fe-4S iron-sulfur center. as a cofactor.

It is found in the plastid. The protein localises to the chloroplast thylakoid membrane. It catalyses the reaction reduced [plastocyanin] + hnu + oxidized [2Fe-2S]-[ferredoxin] = oxidized [plastocyanin] + reduced [2Fe-2S]-[ferredoxin]. PsaA and PsaB bind P700, the primary electron donor of photosystem I (PSI), as well as the electron acceptors A0, A1 and FX. PSI is a plastocyanin-ferredoxin oxidoreductase, converting photonic excitation into a charge separation, which transfers an electron from the donor P700 chlorophyll pair to the spectroscopically characterized acceptors A0, A1, FX, FA and FB in turn. Oxidized P700 is reduced on the lumenal side of the thylakoid membrane by plastocyanin. This chain is Photosystem I P700 chlorophyll a apoprotein A1, found in Oryza nivara (Indian wild rice).